Reading from the N-terminus, the 227-residue chain is MRHEAPMQMASAQDARFGQKDSSDQNFDYMFKLLIIGNSSVGKTSFLFRYADDSFTSAFVSTVGIDFKVKTVFKNEKRIKLQIWDTAGQERYRTITTAYYRGAMGFILMYDITNEESFNAVQDWSTQIKTYSWDNAQVILAGNKCDMEDERVVSTERGQRLGEQLGFEFFETSAKDNINVKQTFERLVDIICDKMSESLETDPAITAAKQSTRLKETPPPPQPNCGC.

The GTP site is built by serine 39, glycine 42, lysine 43, threonine 44, serine 45, threonine 56, serine 57, serine 61, and threonine 62. Threonine 44 contributes to the Mg(2+) binding site. Residues 53-66 carry the Switch 1 motif; it reads DSFTSAFVSTVGID. The Mg(2+) site is built by threonine 62 and aspartate 85. Position 86 is a phosphothreonine; by LRRK2 (threonine 86). The short motif at 86–104 is the Switch 2 element; sequence TAGQERYRTITTAYYRGAM. GTP is bound by residues glycine 88, asparagine 143, lysine 144, aspartate 146, alanine 174, and lysine 175. Phosphoserine occurs at positions 196 and 198. The interval 202 to 227 is disordered; the sequence is DPAITAAKQSTRLKETPPPPQPNCGC. Threonine 206 carries the phosphothreonine modification. Residues 217 to 227 are compositionally biased toward pro residues; sequence TPPPPQPNCGC. 2 S-geranylgeranyl cysteine lipidation sites follow: cysteine 225 and cysteine 227. At cysteine 227 the chain carries Cysteine methyl ester.

Belongs to the small GTPase superfamily. Rab family. In terms of assembly, interacts with RIMS1, RIMS2, RPH3A and RPH3AL. Interacts with GDI2, CHM and CHML; phosphorylation at Thr-86 disrupts these interactions. Interacts with MADD (via uDENN domain); the GTP-bound form is preferred for interaction. Mg(2+) serves as cofactor. Phosphorylation of Thr-86 in the switch II region by LRRK2 prevents the association of RAB regulatory proteins, including CHM, CHML and RAB GDP dissociation inhibitor GDI2.

The protein localises to the cell membrane. It catalyses the reaction GTP + H2O = GDP + phosphate + H(+). With respect to regulation, regulated by guanine nucleotide exchange factors (GEFs) which promote the exchange of bound GDP for free GTP. Regulated by GTPase activating proteins (GAPs) which increase the GTP hydrolysis activity. Inhibited by GDP dissociation inhibitors (GDIs) which prevent Rab-GDP dissociation. In terms of biological role, the small GTPases Rab are key regulators of intracellular membrane trafficking, from the formation of transport vesicles to their fusion with membranes. Rabs cycle between an inactive GDP-bound form and an active GTP-bound form that is able to recruit to membranes different sets of downstream effectors directly responsible for vesicle formation, movement, tethering and fusion. The chain is Ras-related protein Rab-3C from Mus musculus (Mouse).